The sequence spans 617 residues: Sodium-coupled monocarboxylate transporter 2 (617 aa).

Residues 1 to 5 (MEVKN) are Extracellular-facing. The chain crosses the membrane as a helical span at residues 6–26 (FAVWDYVVFAALFIISSGIGV). Topologically, residues 27–47 (FYAIKERKKATSREFLVGGRQ) are cytoplasmic. Residues 48-68 (MSFGPVALSLTASFMSAVTVL) form a helical membrane-spanning segment. Over 69–80 (GTPADVYRFGAS) the chain is Extracellular. A helical transmembrane segment spans residues 81-101 (FVLFFITYGLVIILTSELFLP). Over 102-128 (VFYRSGITSTYEYLQLRFNKPVRYAAT) the chain is Cytoplasmic. The chain crosses the membrane as a helical span at residues 129–149 (VIYIVQTILYTGVVVYAPALA). Over 150 to 157 (LNQVTGFD) the chain is Extracellular. A helical transmembrane segment spans residues 158-178 (LWGSVFATGIVCTFYCTLGGL). Residues 179–180 (KA) lie on the Cytoplasmic side of the membrane. Residues 181–201 (VVWTDAFQMVVMIVGFLTVLI) traverse the membrane as a helical segment. Residues 202-235 (QGSTYAGGLHNVLEQAENGSRLNIFDFDIDPLRR) lie on the Extracellular side of the membrane. N-linked (GlcNAc...) asparagine glycosylation occurs at Asn-219. The chain crosses the membrane as a helical span at residues 236 to 256 (HTFWTISVGGTFTWLGIYGVN). Residues 257–273 (QSTIQRCISCKTEKHAK) lie on the Cytoplasmic side of the membrane. The chain crosses the membrane as a helical span at residues 274-294 (LALYFNLLGLWIILLCAVFSG). Residues 295-334 (LTMYAHFKDCDPWTSGIISAPDQLMPYFVMELFSTMPGLP) are Extracellular-facing. The helical transmembrane segment at 335 to 357 (GLFVACAFSGTLSTVAASINALA) threads the bilayer. Topologically, residues 358 to 385 (TVTFEDFVKSCFPRLSDKLSTWISKGLC) are cytoplasmic. The chain crosses the membrane as a helical span at residues 386–406 (LLFGVICTSTAVAASLMGGVI). Topologically, residues 407 to 411 (QAALS) are extracellular. The chain crosses the membrane as a helical span at residues 412–432 (IHGMCGGPMLGLFSLGILFPF). Residues 433-437 (VNWKG) lie on the Cytoplasmic side of the membrane. The chain crosses the membrane as a helical span at residues 438 to 458 (ALAGLLTGILLSFWVAIGAFI). At 459–507 (YPAPASKTWPLPLSTDQCGLSNVTESVPPVLSSRPAIAETWYALSYLHY) the chain is on the extracellular side. N-linked (GlcNAc...) asparagine glycosylation is present at Asn-480. Residues 508-528 (STVGCLGCIAAGVIISFLTGL) traverse the membrane as a helical segment. The Cytoplasmic portion of the chain corresponds to 529–617 (QKGKDIPPLL…NMALEKITHF (89 aa)).

This sequence belongs to the sodium:solute symporter (SSF) (TC 2.A.21) family.

The protein localises to the apical cell membrane. The catalysed reaction is (S)-lactate(out) + Na(+)(out) = (S)-lactate(in) + Na(+)(in). The enzyme catalyses nicotinate(out) + Na(+)(out) = nicotinate(in) + Na(+)(in). It catalyses the reaction pyruvate(out) + Na(+)(out) = pyruvate(in) + Na(+)(in). It carries out the reaction propanoate(out) + Na(+)(out) = propanoate(in) + Na(+)(in). The catalysed reaction is butanoate(out) + Na(+)(out) = butanoate(in) + Na(+)(in). The enzyme catalyses acetoacetate(out) + Na(+)(out) = acetoacetate(in) + Na(+)(in). In terms of biological role, acts as an electroneutral and low-affinity sodium (Na(+))-dependent sodium-coupled solute transporter. Catalyzes the transport across the plasma membrane of many monocarboxylates such as lactate, pyruvate, nicotinate, propionate, butyrate and beta-D-hydroxybutyrate. May be responsible for the first step of reabsorption of monocarboxylates from the lumen of the proximal tubule of the kidney and the small intestine. May play also a role in monocarboxylates transport in the retina. Mediates electroneutral uptake of lactate, with a stoichiometry of 2 Na(+) for each lactate. This chain is Sodium-coupled monocarboxylate transporter 2 (SLC5A12), found in Bos taurus (Bovine).